Reading from the N-terminus, the 150-residue chain is Large ribosomal subunit protein uL13 (150 aa).

The disordered stretch occupies residues 129–150 (PEHPHSAQRPQTLQLNPAASSQ). Residues 136–150 (QRPQTLQLNPAASSQ) are compositionally biased toward polar residues.

Belongs to the universal ribosomal protein uL13 family. In terms of assembly, part of the 50S ribosomal subunit.

Functionally, this protein is one of the early assembly proteins of the 50S ribosomal subunit, although it is not seen to bind rRNA by itself. It is important during the early stages of 50S assembly. The protein is Large ribosomal subunit protein uL13 of Prochlorococcus marinus (strain MIT 9303).